Reading from the N-terminus, the 298-residue chain is Probable alpha-L-glutamate ligase 2 (298 aa).

The ATP-grasp domain occupies 104-287; that stretch reads MQLLSRQGIG…VADAIICFME (184 aa). ATP is bound by residues Lys-141, 178–179, Asp-187, and 211–213; these read EY and RSN. Asp-248, Glu-260, and Asn-262 together coordinate Mg(2+). Mn(2+)-binding residues include Asp-248, Glu-260, and Asn-262.

The protein belongs to the RimK family. It depends on Mg(2+) as a cofactor. Mn(2+) is required as a cofactor.

This Shewanella frigidimarina (strain NCIMB 400) protein is Probable alpha-L-glutamate ligase 2.